The chain runs to 89 residues: Small ribosomal subunit protein uS15 (89 aa).

It belongs to the universal ribosomal protein uS15 family. In terms of assembly, part of the 30S ribosomal subunit. Forms a bridge to the 50S subunit in the 70S ribosome, contacting the 23S rRNA.

Its function is as follows. One of the primary rRNA binding proteins, it binds directly to 16S rRNA where it helps nucleate assembly of the platform of the 30S subunit by binding and bridging several RNA helices of the 16S rRNA. Forms an intersubunit bridge (bridge B4) with the 23S rRNA of the 50S subunit in the ribosome. This chain is Small ribosomal subunit protein uS15, found in Nitrosomonas eutropha (strain DSM 101675 / C91 / Nm57).